A 313-amino-acid polypeptide reads, in one-letter code: Putative S-adenosyl-L-methionine-dependent methyltransferase MAV_5150 (313 aa).

S-adenosyl-L-methionine contacts are provided by residues Asp139 and 168 to 169; that span reads DL.

This sequence belongs to the UPF0677 family.

Its function is as follows. Exhibits S-adenosyl-L-methionine-dependent methyltransferase activity. This Mycobacterium avium (strain 104) protein is Putative S-adenosyl-L-methionine-dependent methyltransferase MAV_5150.